The primary structure comprises 201 residues: Orotate phosphoribosyltransferase (201 aa).

113-121 (EDIITTGKS) lines the 5-phospho-alpha-D-ribose 1-diphosphate pocket. Positions 117 and 145 each coordinate orotate.

It belongs to the purine/pyrimidine phosphoribosyltransferase family. PyrE subfamily. As to quaternary structure, homodimer. Mg(2+) is required as a cofactor.

The catalysed reaction is orotidine 5'-phosphate + diphosphate = orotate + 5-phospho-alpha-D-ribose 1-diphosphate. Its pathway is pyrimidine metabolism; UMP biosynthesis via de novo pathway; UMP from orotate: step 1/2. Catalyzes the transfer of a ribosyl phosphate group from 5-phosphoribose 1-diphosphate to orotate, leading to the formation of orotidine monophosphate (OMP). This Helicobacter pylori (strain ATCC 700392 / 26695) (Campylobacter pylori) protein is Orotate phosphoribosyltransferase.